Consider the following 78-residue polypeptide: D-alanyl carrier protein (78 aa).

Residues 1-78 (MAFRENVLEI…MIITQLEALK (78 aa)) enclose the Carrier domain. Residue S36 is modified to O-(pantetheine 4'-phosphoryl)serine.

Belongs to the DltC family. 4'-phosphopantetheine is transferred from CoA to a specific serine of apo-DCP.

The protein resides in the cytoplasm. It participates in cell wall biogenesis; lipoteichoic acid biosynthesis. In terms of biological role, carrier protein involved in the D-alanylation of lipoteichoic acid (LTA). The loading of thioester-linked D-alanine onto DltC is catalyzed by D-alanine--D-alanyl carrier protein ligase DltA. The DltC-carried D-alanyl group is further transferred to cell membrane phosphatidylglycerol (PG) by forming an ester bond, probably catalyzed by DltD. D-alanylation of LTA plays an important role in modulating the properties of the cell wall in Gram-positive bacteria, influencing the net charge of the cell wall. This Listeria monocytogenes serotype 4b (strain CLIP80459) protein is D-alanyl carrier protein.